We begin with the raw amino-acid sequence, 273 residues long: Glutamate racemase (273 aa).

Substrate-binding positions include Asp17–Ser18 and Tyr49–Gly50. Cys80 functions as the Proton donor/acceptor in the catalytic mechanism. Asn81 to Thr82 is a substrate binding site. Cys190 (proton donor/acceptor) is an active-site residue. Thr191–His192 provides a ligand contact to substrate.

Belongs to the aspartate/glutamate racemases family.

It catalyses the reaction L-glutamate = D-glutamate. It participates in cell wall biogenesis; peptidoglycan biosynthesis. In terms of biological role, provides the (R)-glutamate required for cell wall biosynthesis. The protein is Glutamate racemase of Corynebacterium glutamicum (strain ATCC 13032 / DSM 20300 / JCM 1318 / BCRC 11384 / CCUG 27702 / LMG 3730 / NBRC 12168 / NCIMB 10025 / NRRL B-2784 / 534).